The sequence spans 95 residues: Aspartyl/glutamyl-tRNA(Asn/Gln) amidotransferase subunit C (95 aa).

It belongs to the GatC family. As to quaternary structure, heterotrimer of A, B and C subunits.

The catalysed reaction is L-glutamyl-tRNA(Gln) + L-glutamine + ATP + H2O = L-glutaminyl-tRNA(Gln) + L-glutamate + ADP + phosphate + H(+). The enzyme catalyses L-aspartyl-tRNA(Asn) + L-glutamine + ATP + H2O = L-asparaginyl-tRNA(Asn) + L-glutamate + ADP + phosphate + 2 H(+). Allows the formation of correctly charged Asn-tRNA(Asn) or Gln-tRNA(Gln) through the transamidation of misacylated Asp-tRNA(Asn) or Glu-tRNA(Gln) in organisms which lack either or both of asparaginyl-tRNA or glutaminyl-tRNA synthetases. The reaction takes place in the presence of glutamine and ATP through an activated phospho-Asp-tRNA(Asn) or phospho-Glu-tRNA(Gln). This chain is Aspartyl/glutamyl-tRNA(Asn/Gln) amidotransferase subunit C, found in Geotalea daltonii (strain DSM 22248 / JCM 15807 / FRC-32) (Geobacter daltonii).